The sequence spans 70 residues: DNA-directed RNA polymerase subunit omega (70 aa).

This sequence belongs to the RNA polymerase subunit omega family. The RNAP catalytic core consists of 2 alpha, 1 beta, 1 beta' and 1 omega subunit. When a sigma factor is associated with the core the holoenzyme is formed, which can initiate transcription.

It catalyses the reaction RNA(n) + a ribonucleoside 5'-triphosphate = RNA(n+1) + diphosphate. In terms of biological role, promotes RNA polymerase assembly. Latches the N- and C-terminal regions of the beta' subunit thereby facilitating its interaction with the beta and alpha subunits. In Staphylococcus epidermidis (strain ATCC 35984 / DSM 28319 / BCRC 17069 / CCUG 31568 / BM 3577 / RP62A), this protein is DNA-directed RNA polymerase subunit omega.